We begin with the raw amino-acid sequence, 69 residues long: Cytochrome c oxidase subunit 8A, mitochondrial (69 aa).

The N-terminal 25 residues, 1–25 (MSVLTPLLLRGLTGSARRLPMPCAR), are a transit peptide targeting the mitochondrion. The short motif at 2–19 (SVLTPLLLRGLTGSARRL) is the SIFI-degron element. Topologically, residues 26-36 (VHSKPPREQLG) are mitochondrial matrix. Residues 37-60 (TMDIAIGLTSCFVCFLLPSGWVLS) form a helical membrane-spanning segment. The Mitochondrial intermembrane portion of the chain corresponds to 61–69 (HLENYKKRE).

Belongs to the cytochrome c oxidase VIII family. Component of the cytochrome c oxidase (complex IV, CIV), a multisubunit enzyme composed of 14 subunits. The complex is composed of a catalytic core of 3 subunits MT-CO1, MT-CO2 and MT-CO3, encoded in the mitochondrial DNA, and 11 supernumerary subunits COX4I, COX5A, COX5B, COX6A, COX6B, COX6C, COX7A, COX7B, COX7C, COX8 and NDUFA4, which are encoded in the nuclear genome. The complex exists as a monomer or a dimer and forms supercomplexes (SCs) in the inner mitochondrial membrane with NADH-ubiquinone oxidoreductase (complex I, CI) and ubiquinol-cytochrome c oxidoreductase (cytochrome b-c1 complex, complex III, CIII), resulting in different assemblies (supercomplex SCI(1)III(2)IV(1) and megacomplex MCI(2)III(2)IV(2)). Post-translationally, in response to mitochondrial stress, the precursor protein is ubiquitinated by the SIFI complex in the cytoplasm before mitochondrial import, leading to its degradation. Within the SIFI complex, UBR4 initiates ubiquitin chain that are further elongated or branched by KCMF1.

The protein resides in the mitochondrion inner membrane. It participates in energy metabolism; oxidative phosphorylation. Functionally, component of the cytochrome c oxidase, the last enzyme in the mitochondrial electron transport chain which drives oxidative phosphorylation. The respiratory chain contains 3 multisubunit complexes succinate dehydrogenase (complex II, CII), ubiquinol-cytochrome c oxidoreductase (cytochrome b-c1 complex, complex III, CIII) and cytochrome c oxidase (complex IV, CIV), that cooperate to transfer electrons derived from NADH and succinate to molecular oxygen, creating an electrochemical gradient over the inner membrane that drives transmembrane transport and the ATP synthase. Cytochrome c oxidase is the component of the respiratory chain that catalyzes the reduction of oxygen to water. Electrons originating from reduced cytochrome c in the intermembrane space (IMS) are transferred via the dinuclear copper A center (CU(A)) of subunit 2 and heme A of subunit 1 to the active site in subunit 1, a binuclear center (BNC) formed by heme A3 and copper B (CU(B)). The BNC reduces molecular oxygen to 2 water molecules using 4 electrons from cytochrome c in the IMS and 4 protons from the mitochondrial matrix. The chain is Cytochrome c oxidase subunit 8A, mitochondrial (COX8A) from Nycticebus coucang (Slow loris).